Here is a 378-residue protein sequence, read N- to C-terminus: UDP-N-acetylglucosamine--N-acetylmuramyl-(pentapeptide) pyrophosphoryl-undecaprenol N-acetylglucosamine transferase (378 aa).

UDP-N-acetyl-alpha-D-glucosamine-binding positions include 14–16, Asn125, Arg165, Ser193, and Gln293; that span reads TGG.

This sequence belongs to the glycosyltransferase 28 family. MurG subfamily.

The protein resides in the cell inner membrane. The catalysed reaction is di-trans,octa-cis-undecaprenyl diphospho-N-acetyl-alpha-D-muramoyl-L-alanyl-D-glutamyl-meso-2,6-diaminopimeloyl-D-alanyl-D-alanine + UDP-N-acetyl-alpha-D-glucosamine = di-trans,octa-cis-undecaprenyl diphospho-[N-acetyl-alpha-D-glucosaminyl-(1-&gt;4)]-N-acetyl-alpha-D-muramoyl-L-alanyl-D-glutamyl-meso-2,6-diaminopimeloyl-D-alanyl-D-alanine + UDP + H(+). It participates in cell wall biogenesis; peptidoglycan biosynthesis. Functionally, cell wall formation. Catalyzes the transfer of a GlcNAc subunit on undecaprenyl-pyrophosphoryl-MurNAc-pentapeptide (lipid intermediate I) to form undecaprenyl-pyrophosphoryl-MurNAc-(pentapeptide)GlcNAc (lipid intermediate II). In Bartonella tribocorum (strain CIP 105476 / IBS 506), this protein is UDP-N-acetylglucosamine--N-acetylmuramyl-(pentapeptide) pyrophosphoryl-undecaprenol N-acetylglucosamine transferase.